The chain runs to 284 residues: Pollen allergen Phl p 5b (284 aa).

Residues 1 to 19 (AAAAVPRRGPRGGPGRSYT) form the signal peptide. The segment at 1–21 (AAAAVPRRGPRGGPGRSYTAD) is disordered.

This sequence belongs to the Poa p IX/Phl p VI allergen family. In terms of assembly, homodimer; disulfide-linked.

In terms of biological role, has ribonuclease activity. May be involved in host-pathogen interactions. This Phleum pratense (Common timothy) protein is Pollen allergen Phl p 5b.